The primary structure comprises 203 residues: Outer-membrane lipoprotein LolB (203 aa).

A signal peptide spans 1–22 (MPVNLNHTLLLCLLVAASLLSG). C23 carries the N-palmitoyl cysteine lipid modification. C23 carries S-diacylglycerol cysteine lipidation.

This sequence belongs to the LolB family. As to quaternary structure, monomer.

The protein localises to the cell outer membrane. Functionally, plays a critical role in the incorporation of lipoproteins in the outer membrane after they are released by the LolA protein. The chain is Outer-membrane lipoprotein LolB from Shewanella denitrificans (strain OS217 / ATCC BAA-1090 / DSM 15013).